The sequence spans 395 residues: MHRITILGATGSIGESTLDVVRRHADRYAVHALTAHRQVQKLAASCIEFRPARAVVGTSEAAAELEALLRMAGVKTEVSHGEAALESVASDAQTDSVMAAIVGAAGLRPTLAAARAGKRVLLANKEALVMSGRIFMDAVREHGATLLPIDSEHNAIFQCLPANDQRYRAGVAKVVLTASGGPFRTRDPATLHDITPDQACAHPNWVMGRKISVDSATMMNKGLEVIEAHWLFGAPAEHIEVLIHPQSIVHSMVAYRDGSVLAQLGNPDMRTPIAYGLAYPERIDAGVSPLDLTLAGALNFEKPDLVRFPCLALAFDALRAGGVAPAVLNAANEVAVEAFLQGGIRFTDIARIVGNVLEKAPHGAADSLECVLEADQLARQSARACLQDVTTSAVR.

Positions 10, 11, 12, 13, 37, 38, and 124 each coordinate NADPH. 1-deoxy-D-xylulose 5-phosphate is bound at residue K125. E126 contacts NADPH. D150 provides a ligand contact to Mn(2+). 1-deoxy-D-xylulose 5-phosphate is bound by residues S151, E152, S179, and H202. Residue E152 participates in Mn(2+) binding. G208 is an NADPH binding site. 1-deoxy-D-xylulose 5-phosphate contacts are provided by S215, N220, K221, and E224. E224 is a binding site for Mn(2+).

This sequence belongs to the DXR family. It depends on Mg(2+) as a cofactor. The cofactor is Mn(2+).

It carries out the reaction 2-C-methyl-D-erythritol 4-phosphate + NADP(+) = 1-deoxy-D-xylulose 5-phosphate + NADPH + H(+). It participates in isoprenoid biosynthesis; isopentenyl diphosphate biosynthesis via DXP pathway; isopentenyl diphosphate from 1-deoxy-D-xylulose 5-phosphate: step 1/6. Catalyzes the NADPH-dependent rearrangement and reduction of 1-deoxy-D-xylulose-5-phosphate (DXP) to 2-C-methyl-D-erythritol 4-phosphate (MEP). This is 1-deoxy-D-xylulose 5-phosphate reductoisomerase from Cupriavidus pinatubonensis (strain JMP 134 / LMG 1197) (Cupriavidus necator (strain JMP 134)).